Reading from the N-terminus, the 326-residue chain is Acetyl-coenzyme A carboxylase carboxyl transferase subunit alpha (326 aa).

The region spanning 44-298 (KLETRAMQLR…KQALLDNLDE (255 aa)) is the CoA carboxyltransferase C-terminal domain.

This sequence belongs to the AccA family. As to quaternary structure, acetyl-CoA carboxylase is a heterohexamer composed of biotin carboxyl carrier protein (AccB), biotin carboxylase (AccC) and two subunits each of ACCase subunit alpha (AccA) and ACCase subunit beta (AccD).

It is found in the cytoplasm. It carries out the reaction N(6)-carboxybiotinyl-L-lysyl-[protein] + acetyl-CoA = N(6)-biotinyl-L-lysyl-[protein] + malonyl-CoA. Its pathway is lipid metabolism; malonyl-CoA biosynthesis; malonyl-CoA from acetyl-CoA: step 1/1. Its function is as follows. Component of the acetyl coenzyme A carboxylase (ACC) complex. First, biotin carboxylase catalyzes the carboxylation of biotin on its carrier protein (BCCP) and then the CO(2) group is transferred by the carboxyltransferase to acetyl-CoA to form malonyl-CoA. The protein is Acetyl-coenzyme A carboxylase carboxyl transferase subunit alpha of Nostoc sp. (strain PCC 7120 / SAG 25.82 / UTEX 2576).